We begin with the raw amino-acid sequence, 569 residues long: 2-succinyl-5-enolpyruvyl-6-hydroxy-3-cyclohexene-1-carboxylate synthase (569 aa).

Belongs to the TPP enzyme family. MenD subfamily. As to quaternary structure, homodimer. Requires Mg(2+) as cofactor. Mn(2+) is required as a cofactor. It depends on thiamine diphosphate as a cofactor.

The enzyme catalyses isochorismate + 2-oxoglutarate + H(+) = 5-enolpyruvoyl-6-hydroxy-2-succinyl-cyclohex-3-ene-1-carboxylate + CO2. It functions in the pathway quinol/quinone metabolism; 1,4-dihydroxy-2-naphthoate biosynthesis; 1,4-dihydroxy-2-naphthoate from chorismate: step 2/7. Its pathway is quinol/quinone metabolism; menaquinone biosynthesis. In terms of biological role, catalyzes the thiamine diphosphate-dependent decarboxylation of 2-oxoglutarate and the subsequent addition of the resulting succinic semialdehyde-thiamine pyrophosphate anion to isochorismate to yield 2-succinyl-5-enolpyruvyl-6-hydroxy-3-cyclohexene-1-carboxylate (SEPHCHC). This Paenarthrobacter aurescens (strain TC1) protein is 2-succinyl-5-enolpyruvyl-6-hydroxy-3-cyclohexene-1-carboxylate synthase.